We begin with the raw amino-acid sequence, 37 residues long: MKVRPSVKPICDKCKVIRRKGKVRVICENPKHKQRQG.

This sequence belongs to the bacterial ribosomal protein bL36 family.

This Halothermothrix orenii (strain H 168 / OCM 544 / DSM 9562) protein is Large ribosomal subunit protein bL36.